The following is a 519-amino-acid chain: Probable DNA ligase (519 aa).

E211 contributes to the ATP binding site. The active-site N6-AMP-lysine intermediate is the K213. ATP contacts are provided by R218, R233, E262, F302, R374, and K380.

The protein belongs to the ATP-dependent DNA ligase family. Mg(2+) serves as cofactor.

It catalyses the reaction ATP + (deoxyribonucleotide)n-3'-hydroxyl + 5'-phospho-(deoxyribonucleotide)m = (deoxyribonucleotide)n+m + AMP + diphosphate.. DNA ligase that seals nicks in double-stranded DNA during DNA replication, DNA recombination and DNA repair. This is Probable DNA ligase from Anaeromyxobacter sp. (strain Fw109-5).